Here is a 458-residue protein sequence, read N- to C-terminus: Bifunctional protein GlmU (458 aa).

Residues 1-230 form a pyrophosphorylase region; the sequence is MLQVDVVILA…DWEVSGVNDK (230 aa). Residues 9–12, Lys-23, Gln-75, and 80–81 contribute to the UDP-N-acetyl-alpha-D-glucosamine site; these read LAAG and GT. Position 104 (Asp-104) interacts with Mg(2+). 4 residues coordinate UDP-N-acetyl-alpha-D-glucosamine: Gly-139, Glu-155, Asn-170, and Asn-228. Position 228 (Asn-228) interacts with Mg(2+). Positions 231-251 are linker; sequence IQLSILERAHQQDTANRLMEQ. Residues 252–458 form an N-acetyltransferase region; sequence GVMFADPARF…NWKRPRKDRN (207 aa). Residues Arg-334 and Lys-352 each coordinate UDP-N-acetyl-alpha-D-glucosamine. His-364 serves as the catalytic Proton acceptor. Residues Tyr-367 and Asn-378 each contribute to the UDP-N-acetyl-alpha-D-glucosamine site. Acetyl-CoA-binding positions include Ala-381, 387 to 388, Ser-406, Ala-424, and Arg-441; that span reads NY.

The protein in the N-terminal section; belongs to the N-acetylglucosamine-1-phosphate uridyltransferase family. This sequence in the C-terminal section; belongs to the transferase hexapeptide repeat family. In terms of assembly, homotrimer. It depends on Mg(2+) as a cofactor.

The protein resides in the cytoplasm. It carries out the reaction alpha-D-glucosamine 1-phosphate + acetyl-CoA = N-acetyl-alpha-D-glucosamine 1-phosphate + CoA + H(+). The catalysed reaction is N-acetyl-alpha-D-glucosamine 1-phosphate + UTP + H(+) = UDP-N-acetyl-alpha-D-glucosamine + diphosphate. The protein operates within nucleotide-sugar biosynthesis; UDP-N-acetyl-alpha-D-glucosamine biosynthesis; N-acetyl-alpha-D-glucosamine 1-phosphate from alpha-D-glucosamine 6-phosphate (route II): step 2/2. It participates in nucleotide-sugar biosynthesis; UDP-N-acetyl-alpha-D-glucosamine biosynthesis; UDP-N-acetyl-alpha-D-glucosamine from N-acetyl-alpha-D-glucosamine 1-phosphate: step 1/1. It functions in the pathway bacterial outer membrane biogenesis; LPS lipid A biosynthesis. Catalyzes the last two sequential reactions in the de novo biosynthetic pathway for UDP-N-acetylglucosamine (UDP-GlcNAc). The C-terminal domain catalyzes the transfer of acetyl group from acetyl coenzyme A to glucosamine-1-phosphate (GlcN-1-P) to produce N-acetylglucosamine-1-phosphate (GlcNAc-1-P), which is converted into UDP-GlcNAc by the transfer of uridine 5-monophosphate (from uridine 5-triphosphate), a reaction catalyzed by the N-terminal domain. This Nitrosomonas europaea (strain ATCC 19718 / CIP 103999 / KCTC 2705 / NBRC 14298) protein is Bifunctional protein GlmU.